The primary structure comprises 350 residues: Holliday junction branch migration complex subunit RuvB (350 aa).

The tract at residues 4-184 (TDRLIAAQPQ…FGIVQRLEFY (181 aa)) is large ATPase domain (RuvB-L). ATP is bound by residues I23, R24, G65, K68, T69, T70, 131 to 133 (EDY), R174, Y184, and R221. T69 provides a ligand contact to Mg(2+). The small ATPAse domain (RuvB-S) stretch occupies residues 185-255 (AVEELTEIVV…IADQALNMLH (71 aa)). Residues 258–350 (RHGLDHMDRR…PLTPPGESDA (93 aa)) are head domain (RuvB-H). The DNA site is built by R294, R313, and R318.

It belongs to the RuvB family. As to quaternary structure, homohexamer. Forms an RuvA(8)-RuvB(12)-Holliday junction (HJ) complex. HJ DNA is sandwiched between 2 RuvA tetramers; dsDNA enters through RuvA and exits via RuvB. An RuvB hexamer assembles on each DNA strand where it exits the tetramer. Each RuvB hexamer is contacted by two RuvA subunits (via domain III) on 2 adjacent RuvB subunits; this complex drives branch migration. In the full resolvosome a probable DNA-RuvA(4)-RuvB(12)-RuvC(2) complex forms which resolves the HJ.

It localises to the cytoplasm. It carries out the reaction ATP + H2O = ADP + phosphate + H(+). In terms of biological role, the RuvA-RuvB-RuvC complex processes Holliday junction (HJ) DNA during genetic recombination and DNA repair, while the RuvA-RuvB complex plays an important role in the rescue of blocked DNA replication forks via replication fork reversal (RFR). RuvA specifically binds to HJ cruciform DNA, conferring on it an open structure. The RuvB hexamer acts as an ATP-dependent pump, pulling dsDNA into and through the RuvAB complex. RuvB forms 2 homohexamers on either side of HJ DNA bound by 1 or 2 RuvA tetramers; 4 subunits per hexamer contact DNA at a time. Coordinated motions by a converter formed by DNA-disengaged RuvB subunits stimulates ATP hydrolysis and nucleotide exchange. Immobilization of the converter enables RuvB to convert the ATP-contained energy into a lever motion, pulling 2 nucleotides of DNA out of the RuvA tetramer per ATP hydrolyzed, thus driving DNA branch migration. The RuvB motors rotate together with the DNA substrate, which together with the progressing nucleotide cycle form the mechanistic basis for DNA recombination by continuous HJ branch migration. Branch migration allows RuvC to scan DNA until it finds its consensus sequence, where it cleaves and resolves cruciform DNA. The chain is Holliday junction branch migration complex subunit RuvB from Chromohalobacter salexigens (strain ATCC BAA-138 / DSM 3043 / CIP 106854 / NCIMB 13768 / 1H11).